The following is a 1953-amino-acid chain: MLKNSGSKHSNSKESHSNSSSGIFQNLKRLANSNATNSNTGSPTYASQQQHSPVGNEVSTSPASSSSFRKLNAPSRSTSTEARPLNKKSTLNTQNLSQYMNGKLSGDVPVSSQHARSHSMQSKYSYSKRNSSQASNKLTRQHTGQSHSASSLLSQGSLTNLSKFTTPDGKIYLEMPSDPYEVEVLFEDIMYKRNIFQSLSEDKQEALMGYSIEKKWLIVKQDLQNELKKMRANTTSSSTASRTSMASDHHPILTANSSLSSPKSVLMTSASSPTSTVYSNSLNHSTTLSSVGTSTSKGKKLVSGSLKKQPSLNNIYRGGAENNTSASTLPGDRTNRPPIHYVQRILADKLTSDEMKDLWVTLRTEQLDWVDAFIDHQGHIAMANVLMNSIYKTAPRENLTKELLEKENSFFKCFRVLSMLSQGLYEFSTHRLMTDTVAEGLFSTKLATRKMATEIFVCMLEKKNKSRFEAVLTSLDKKFRIGQNLHMIQNFKKMPQYFSHLTLESHLKIIQAWLFAVEQTLDGRGKMGSLVGASDEFKNGGGENAILEYCQWTMVFINHLCSCSDNINQRMLLRTKLENCGILRIMNKIKLLDYDKVIDQIELYDNNKLDDFNVKLEANNKAFNVDLHDPLSLLKNLWDICKGTENEKLLVSLVQHLFLSSSKLIEENQNSSKLTKQLKLMDSLVTNVSVASTSDEETNMNMAIQRLYDAMQTDEVARRAILESRALTKKLEEIQAERDSLSEKLSKAEHGLVGQLEDELHERDRILAKNQRVMQQLEAELEELKKKHLLEKHQQEVELRKMLTILNSRPEESFNKNEGTRGMNSSLNSSEKANIQKVLQDGLSRAKKDYKDDSKKFGMTLQPNKRLKMLRMQMENIENEARQLEMTNFAEFEKDRLEPPIHIKKPKVKKMKNKDRKPLVKPQEADVNKLNDLRRALAEIQMESNDISKFNVEERVNELFNEKKSLALKRLKELETKYKGFGIDFNVDEIMDSPKKNTGDVETEEDANYASLDPKTYQKKLDEINRITDQLLDIQTQTEHEIQVEEDGESDLSSSSSDDESEEIYQDASPTQELRSEHSELSSGSGPGSFLDALSQKYGTGQNVTASAAFGENNNGSGIGPLHSKVEKTFMNRLRKSTVSSAPYLEELTQKVNKVEPYEQNEDEGLDKKSLPENSTASAASAFDKAEKDMRQHVENGKQGRVVNHEEDKTADFSAVSKLNNTDGAEDLSTQSSVLSSQPPPPPPPPPPVPAKLFGESLEKEKKSEDDTVKQETTGDSPAPPPPPPPPPPPPMALFGKPKGETPPPPPLPSVLSSSTDGVIPPAPPMMPASQIKSAVTSPLLPQSPSLFEKYPRPHKKLKQLHWEKLDCTDNSIWGTGKAEKFADDLYEKGVLADLEKAFAAREIKSLASKRKEDLQKITFLSRDISQQFGINLHMYSSLSVADLVKKILNCDRDFLQTPSVVEFLSKSEIIEVSVNLARNYAPYSTDWEGVRNLEDAKPPEKDPNDLQRADQIYLQLMVNLESYWGSRMRALTVVTSYEREYNELLAKLRKVDKAVSALQESDNLRNVFNVILAVGNFMNDTSKQAQGFKLSTLQRLTFIKDTTNSMTFLNYVEKIVRLNYPSFNDFLSELEPVLDVVKVSIEQLVNDCKDFSQSIVNVERSVEIGNLSDSSKFHPLDKVLIKTLPVLPEARKKGDLLEDEVKLTIMEFESLMHTYGEDSGDKFAKISFFKKFADFINEYKKAQAQNLAAEEEERLYIKHKKIVEEQQKRAQEKEKQKENSNSPSSEGNEEDEAEDRRAVMDKLLEQLKNAGPAKSDPSSARKRALVRKKYLSEKDNAPQLLNDLDTEEGSILYSPEAMDPTADTVIHAESPTPLATRGVMNTSEDLPSPSKTSALEDQEEISDRARMLLKELRGSDTPVKQNSILDEHLEKLRARKERSIGEASTGNRLSFK.

Disordered stretches follow at residues 1 to 152 (MLKN…ASSL), 230 to 258 (MRANTTSSSTASRTSMASDHHPILTANSS), 263 to 282 (KSVLMTSASSPTSTVYSNSL), and 287 to 306 (TLSSVGTSTSKGKKLVSGSL). A compositionally biased stretch (low complexity) spans 31-40 (ANSNATNSNT). Composition is skewed to polar residues over residues 41-100 (GSPT…SQYM) and 110-143 (VSSQHARSHSMQSKYSYSKRNSSQASNKLTRQHT). The region spanning 174–696 (EMPSDPYEVE…NVSVASTSDE (523 aa)) is the GBD/FH3 domain. Residues 232-246 (ANTTSSSTASRTSMA) are compositionally biased toward low complexity. Over residues 263-278 (KSVLMTSASSPTSTVY) the composition is skewed to polar residues. Ser311 and Ser325 each carry phosphoserine. The interval 312–337 (LNNIYRGGAENNTSASTLPGDRTNRP) is disordered. 3 coiled-coil regions span residues 712–807 (QTDE…TILN), 864–894 (NKRLKMLRMQMENIENEARQLEMTNFAEFEK), and 928–981 (NKLN…YKGF). Disordered stretches follow at residues 990–1014 (IMDSPKKNTGDVETEEDANYASLDP), 1040–1094 (HEIQ…LDAL), and 1149–1330 (TQKV…MPAS). One can recognise an FH1 domain in the interval 1053–1337 (SSSSSDDESE…PASQIKSAVT (285 aa)). A phosphoserine mark is found at Ser1085 and Ser1170. Residues 1184-1211 (DKAEKDMRQHVENGKQGRVVNHEEDKTA) show a composition bias toward basic and acidic residues. Over residues 1217–1237 (SKLNNTDGAEDLSTQSSVLSS) the composition is skewed to polar residues. Residues 1238 to 1250 (QPPPPPPPPPPVP) are compositionally biased toward pro residues. A compositionally biased stretch (basic and acidic residues) spans 1257–1270 (SLEKEKKSEDDTVK). Pro residues predominate over residues 1278–1292 (PAPPPPPPPPPPPPM). 2 positions are modified to phosphoserine: Ser1338 and Ser1344. Residues 1348–1766 (FEKYPRPHKK…YIKHKKIVEE (419 aa)) enclose the FH2 domain. Positions 1732 to 1811 (KFADFINEYK…DKLLEQLKNA (80 aa)) form a coiled coil. Over residues 1768–1779 (QKRAQEKEKQKE) the composition is skewed to basic and acidic residues. Disordered stretches follow at residues 1768 to 1797 (QKRAQEKEKQKENSNSPSSEGNEEDEAEDR), 1809 to 1844 (KNAGPAKSDPSSARKRALVRKKYLSEKDNAPQLLND), and 1872 to 1899 (PTPLATRGVMNTSEDLPSPSKTSALEDQ). Residues 1792 to 1826 (DEAEDRRAVMDKLLEQLKNAGPAKSDPSSARKRAL) form the DAD domain. Residues 1821–1830 (ARKRALVRKK) are compositionally biased toward basic residues. Over residues 1880 to 1896 (VMNTSEDLPSPSKTSAL) the composition is skewed to polar residues. Thr1918 is modified (phosphothreonine).

This sequence belongs to the formin homology family. BNI1 subfamily. Homodimer, and possibly also homotetramer. Interacts with PFY1 via the FH1 domain and with actin via the FH2 domain.

It is found in the cell membrane. It localises to the cell projection. Its subcellular location is the ruffle membrane. The protein localises to the cytoplasm. The protein resides in the cytoskeleton. In terms of biological role, required for the assembly of F-actin structures, such as actin cables and stress fibers. Nucleates actin filaments. Binds to the barbed end of the actin filament and acts as a leaky capper, slowing both polymerization and depolymerization. Protects the growing actin fiber from tight capping proteins and so increases the time of elongation and the total amount of F-actin. May organize microtubules by mediating spindle positioning and movement in the budding process. Potential target of the RHO family members. The sequence is that of Protein BNI1 (BNI1) from Saccharomyces cerevisiae (strain ATCC 204508 / S288c) (Baker's yeast).